The chain runs to 289 residues: MAGAKEIRTKISSVQSTQKITKAMEMVAASKMRKTQDRMSSSRPYSKAIQGVISHISKANIDYQHPFLIEREVKNVGILIISTDRGLCGGLNVNLFKTALSEIKNWKEQNVEVSLGLIGAKGIGFFQSLGLNIKAQHSGMGDTPVAEELIGIANRMFEAYKEGKIDAIYVTYNKFINTMSQKPIMEKLVPLPELDNDSLGKNSDNWEYIYEPNPQTLLDSLLVRYLESQVYQAVVENLASEQAARMVAMKAATDNAGNLINDLQLVYNKARQASITNELNEIVAGAAAI.

Belongs to the ATPase gamma chain family. In terms of assembly, F-type ATPases have 2 components, CF(1) - the catalytic core - and CF(0) - the membrane proton channel. CF(1) has five subunits: alpha(3), beta(3), gamma(1), delta(1), epsilon(1). CF(0) has three main subunits: a, b and c.

Its subcellular location is the cell inner membrane. Produces ATP from ADP in the presence of a proton gradient across the membrane. The gamma chain is believed to be important in regulating ATPase activity and the flow of protons through the CF(0) complex. This chain is ATP synthase gamma chain, found in Histophilus somni (strain 129Pt) (Haemophilus somnus).